Consider the following 394-residue polypeptide: uncharacterized protein (394 aa).

An F-box domain is found at 7–51 (RKVIPNMPDLILRKIFDQYDYPVLCKMERVCRRWTNIINSKFRKE).

This is an uncharacterized protein from Caenorhabditis elegans.